A 71-amino-acid chain; its full sequence is Omega-conotoxin-like CnVIIF (71 aa).

3 cysteine pairs are disulfide-bonded: C46–C61, C53–C65, and C60–C70. The residue at position 70 (C70) is a Cysteine amide; in CnVIID.

It belongs to the conotoxin M superfamily. As to expression, expressed by the venom duct.

It is found in the secreted. Omega-conotoxins act at presynaptic membranes, they bind and block voltage-gated calcium channels (Cav). This is Omega-conotoxin-like CnVIIF from Conus consors (Singed cone).